The sequence spans 209 residues: Uracil phosphoribosyltransferase (209 aa).

Residues arginine 79, arginine 104, and 131–139 (DPMLATGGS) each bind 5-phospho-alpha-D-ribose 1-diphosphate. Uracil is bound by residues isoleucine 194 and 199–201 (GDA). Aspartate 200 serves as a coordination point for 5-phospho-alpha-D-ribose 1-diphosphate.

This sequence belongs to the UPRTase family. Mg(2+) serves as cofactor.

The enzyme catalyses UMP + diphosphate = 5-phospho-alpha-D-ribose 1-diphosphate + uracil. It functions in the pathway pyrimidine metabolism; UMP biosynthesis via salvage pathway; UMP from uracil: step 1/1. Its activity is regulated as follows. Allosterically activated by GTP. Catalyzes the conversion of uracil and 5-phospho-alpha-D-ribose 1-diphosphate (PRPP) to UMP and diphosphate. The sequence is that of Uracil phosphoribosyltransferase from Anoxybacillus flavithermus (strain DSM 21510 / WK1).